A 551-amino-acid chain; its full sequence is MAVCARLCGVGQSGGCRRRQQRKGAGNGPELEDEEEEDEVRIEAEVIGGQAAEAPRRPRSLLHLPPEILVEIFSSLPGTELPSLAQVCRKFRQILTTDTIWKRRCKQEYGVCENLRKLEVTGVSCRDVYVKRINPRVKSGRFMKILPDYEHMEYRDIYTCLLHQYRHILGLWQPDIGPYGGLLNVVVDGLFIIGWMYLPPHDPHVDEAMRLKPVFRIHLMERNDATVECMYGHKGPHNGQIQIVKKDEFSTKCIQTDYHRMSGGRQEEFRTWLREDLGRTLEDIFHEHMQELILMKFIYICQYDNCLTYRRIYHPPSRPDDLLNPGFFKGTYGSHGLEIVMLSFHGTIAKVTKITGDPNVPAGQQTLEVDLTRPVQLPDVEHLRNFDEMSRLILDVQAQIHREQRQTGNEEDDGRGAGPDKAEHSQQPAPVLRPANEDANKVDGGDGEEQKPPNVQSFVLPTGVMARNEEYPRSCKMCFYGTGLIAGHGFSSPERTPGLFILFDEDRFGFIWLELKSFSLYSRMRDRFQQSEAPSVEAFEEMLQNMQSWTT.

Residues 12–38 form a disordered region; that stretch reads QSGGCRRRQQRKGAGNGPELEDEEEED. The region spanning 58–104 is the F-box domain; sequence PRSLLHLPPEILVEIFSSLPGTELPSLAQVCRKFRQILTTDTIWKRR. Zn(2+)-binding residues include Cys229, His237, Cys253, and His259. Residues 402 to 459 form a disordered region; sequence REQRQTGNEEDDGRGAGPDKAEHSQQPAPVLRPANEDANKVDGGDGEEQKPPNVQSFV. Composition is skewed to basic and acidic residues over residues 414-424 and 435-451; these read GRGAGPDKAEH and ANED…EEQK.

Belongs to the FBXO31 family. In terms of assembly, part of a SCF (SKP1-cullin-F-box) protein ligase complex SCF(FBXO31).

It is found in the cytoplasm. Its pathway is protein modification; protein ubiquitination. Substrate-recognition component of the SCF(FBXO31) protein ligase complex, which specifically mediates the ubiquitination of proteins amidated at their C-terminus in response to oxidative stress, leading to their degradation by the proteasome. Fbxo31 specifically recognizes and binds C-terminal peptides bearing an amide: C-terminal amidation in response to oxidative stress takes place following protein fragmentation. The SCF(FBXO31) also plays a role in G1 arrest following DNA damage by mediating ubiquitination of phosphorylated cyclin-D1 (ccnd1), promoting its degradation by the proteasome, resulting in G1 arrest. The SCF(FBXO31) complex is however not a major regulator of ccnd1 stability during the G1/S transition. This chain is F-box only protein 31 (fbxo31), found in Xenopus tropicalis (Western clawed frog).